The primary structure comprises 614 residues: Autophagy-related protein 22-1 (614 aa).

The interval 1-29 (MQNCTNSPEDQAASVCPPPPQFPGDDTRP) is disordered. The N-linked (GlcNAc...) asparagine glycan is linked to Asn3. 4 consecutive transmembrane segments (helical) span residues 41 to 61 (YGWA…PITL), 126 to 146 (TASF…ILII), 160 to 180 (MLLV…LAVV), and 185 to 205 (LLGG…FVLL). The segment at 229 to 254 (PTGTSHDSTSTADGPGQTDGTETTSL) is disordered. The segment covering 230-254 (TGTSHDSTSTADGPGQTDGTETTSL) has biased composition (polar residues). The next 8 membrane-spanning stretches (helical) occupy residues 291–311 (GIGI…LVVV), 322–342 (LVLF…AMWL), 383–403 (ILLF…VSGT), 417–437 (AALG…AFSW), 452–472 (IVAC…GFIP), 486–506 (WEMY…SSYC), 523–545 (YALY…GIIT), and 554–574 (AFVF…LVDV).

The protein belongs to the ATG22 family.

It localises to the vacuole membrane. Its function is as follows. Vacuolar effluxer which mediate the efflux of amino acids resulting from autophagic degradation. The release of autophagic amino acids allows the maintenance of protein synthesis and viability during nitrogen starvation. The sequence is that of Autophagy-related protein 22-1 (atg22-1) from Aspergillus niger (strain ATCC MYA-4892 / CBS 513.88 / FGSC A1513).